An 88-amino-acid chain; its full sequence is Auxin-responsive protein SAUR21 (88 aa).

The protein belongs to the ARG7 family.

It is found in the cell membrane. In terms of biological role, functions as a positive effector of cell expansion through modulation of auxin transport. In Arabidopsis thaliana (Mouse-ear cress), this protein is Auxin-responsive protein SAUR21.